The following is a 416-amino-acid chain: Homeobox even-skipped homolog protein 1 (416 aa).

Disordered regions lie at residues 30–120 and 138–178; these read AVSS…SDFY and YQHS…LACS. Residues 72–82 show a composition bias toward low complexity; the sequence is GLAGSAAGLGA. The span at 102–114 shows a compositional bias: polar residues; that stretch reads DSLSGQGQPSSSD. The homeobox DNA-binding region spans 183–242; the sequence is MRRYRTAFTREQIARLEKEFYRENYVSRPRRCELAAALNLPETTIKVWFQNRRMKDKRQR.

Belongs to the even-skipped homeobox family.

It localises to the nucleus. Functionally, may play a role in the specification of neuronal cell types. May play a role in the dorsoventral specification of mesodermal cell fate. The polypeptide is Homeobox even-skipped homolog protein 1 (Evx1) (Mus musculus (Mouse)).